We begin with the raw amino-acid sequence, 180 residues long: ATP synthase subunit delta (180 aa).

Belongs to the ATPase delta chain family. As to quaternary structure, F-type ATPases have 2 components, F(1) - the catalytic core - and F(0) - the membrane proton channel. F(1) has five subunits: alpha(3), beta(3), gamma(1), delta(1), epsilon(1). F(0) has three main subunits: a(1), b(2) and c(10-14). The alpha and beta chains form an alternating ring which encloses part of the gamma chain. F(1) is attached to F(0) by a central stalk formed by the gamma and epsilon chains, while a peripheral stalk is formed by the delta and b chains.

Its subcellular location is the cell inner membrane. Functionally, f(1)F(0) ATP synthase produces ATP from ADP in the presence of a proton or sodium gradient. F-type ATPases consist of two structural domains, F(1) containing the extramembraneous catalytic core and F(0) containing the membrane proton channel, linked together by a central stalk and a peripheral stalk. During catalysis, ATP synthesis in the catalytic domain of F(1) is coupled via a rotary mechanism of the central stalk subunits to proton translocation. In terms of biological role, this protein is part of the stalk that links CF(0) to CF(1). It either transmits conformational changes from CF(0) to CF(1) or is implicated in proton conduction. This is ATP synthase subunit delta from Acidovorax sp. (strain JS42).